We begin with the raw amino-acid sequence, 225 residues long: GTP-binding nuclear protein Ran (225 aa).

Residues 8 to 172 (VVAEFKLVLV…LWILRKLTGD (165 aa)) form the Small GTPase Ran-type domain. 19–26 (DGGVGKTT) serves as a coordination point for GTP. Residues 38 to 46 (KRYIATQGV) are switch-I. Residues glycine 69, 123–126 (NKVD), and 151–153 (SAK) each bind GTP. A switch-II region spans residues 69–85 (GQEKLGGLREGYYIGAN).

It belongs to the small GTPase superfamily. Ran family. As to quaternary structure, monomer. Found in a nuclear export complex with RanGTP, exportin and pre-miRNA.

Its subcellular location is the nucleus. Its function is as follows. GTP-binding protein involved in nucleocytoplasmic transport. Required for the import of protein into the nucleus and also for RNA export. Involved in chromatin condensation and control of cell cycle. This Tetrahymena thermophila protein is GTP-binding nuclear protein Ran.